A 470-amino-acid polypeptide reads, in one-letter code: Siroheme synthase (470 aa).

The segment at 1 to 203 (MDYLPIFVEL…GQIQQAEKQL (203 aa)) is precorrin-2 dehydrogenase /sirohydrochlorin ferrochelatase. Residues 22 to 23 (EV) and 43 to 44 (PE) contribute to the NAD(+) site. Serine 128 is subject to Phosphoserine. Residues 214–470 (GELALVGAGP…ISRPAVVDFA (257 aa)) are uroporphyrinogen-III C-methyltransferase. Proline 223 is a binding site for S-adenosyl-L-methionine. Residue aspartate 246 is the Proton acceptor of the active site. Lysine 268 acts as the Proton donor in catalysis. S-adenosyl-L-methionine is bound by residues 299 to 301 (GGD), isoleucine 304, 329 to 330 (TA), methionine 381, and glycine 410.

It in the N-terminal section; belongs to the precorrin-2 dehydrogenase / sirohydrochlorin ferrochelatase family. In the C-terminal section; belongs to the precorrin methyltransferase family.

The catalysed reaction is uroporphyrinogen III + 2 S-adenosyl-L-methionine = precorrin-2 + 2 S-adenosyl-L-homocysteine + H(+). It catalyses the reaction precorrin-2 + NAD(+) = sirohydrochlorin + NADH + 2 H(+). It carries out the reaction siroheme + 2 H(+) = sirohydrochlorin + Fe(2+). The protein operates within cofactor biosynthesis; adenosylcobalamin biosynthesis; precorrin-2 from uroporphyrinogen III: step 1/1. Its pathway is cofactor biosynthesis; adenosylcobalamin biosynthesis; sirohydrochlorin from precorrin-2: step 1/1. It functions in the pathway porphyrin-containing compound metabolism; siroheme biosynthesis; precorrin-2 from uroporphyrinogen III: step 1/1. It participates in porphyrin-containing compound metabolism; siroheme biosynthesis; siroheme from sirohydrochlorin: step 1/1. The protein operates within porphyrin-containing compound metabolism; siroheme biosynthesis; sirohydrochlorin from precorrin-2: step 1/1. Functionally, multifunctional enzyme that catalyzes the SAM-dependent methylations of uroporphyrinogen III at position C-2 and C-7 to form precorrin-2 via precorrin-1. Then it catalyzes the NAD-dependent ring dehydrogenation of precorrin-2 to yield sirohydrochlorin. Finally, it catalyzes the ferrochelation of sirohydrochlorin to yield siroheme. The polypeptide is Siroheme synthase (Photorhabdus laumondii subsp. laumondii (strain DSM 15139 / CIP 105565 / TT01) (Photorhabdus luminescens subsp. laumondii)).